Here is a 247-residue protein sequence, read N- to C-terminus: Membrane-spanning 4-domains subfamily A member 6D (247 aa).

Residues 1-46 (MIPQVVTSETVTVISPNGISFPQTDKPQPSHQSQDSLKKHLKAEIK) are Cytoplasmic-facing. A helical membrane pass occupies residues 47-67 (VMAAIQIMCAVMVLSLGIILA). Topologically, residues 68–80 (SVPSNLHFTSVFS) are extracellular. A helical transmembrane segment spans residues 81–101 (ILLESGYPFVGALFFAISGIL). Residues 102–121 (SIVTEKKMTKPLVHSSLALS) lie on the Cytoplasmic side of the membrane. A helical membrane pass occupies residues 122–142 (ILSVLSALTGIAILSVSLAAL). Residues 143–180 (EPALQQCKLAFTQLDTTQDAYHFFSPEPLNSCFVAKAA) are Extracellular-facing. Residues 181–201 (LTGVFSLMLISSVLELGLAVL) traverse the membrane as a helical segment. Residues 202–247 (TATLWWKQSSSAFSGNVIFLSQNSKNKSSVSSESLCNPTYENILTS) lie on the Cytoplasmic side of the membrane. The residue at position 235 (Ser-235) is a Phosphoserine.

This sequence belongs to the MS4A family. In terms of tissue distribution, expressed in thymus, spleen, intestine, colon, testis, heart, liver, brain, kidney, peripheral lymph node and bone marrow.

It localises to the membrane. In terms of biological role, may be involved in signal transduction as a component of a multimeric receptor complex. The sequence is that of Membrane-spanning 4-domains subfamily A member 6D (Ms4a6d) from Mus musculus (Mouse).